The chain runs to 342 residues: UDP-3-O-acylglucosamine N-acyltransferase (342 aa).

Catalysis depends on His234, which acts as the Proton acceptor.

This sequence belongs to the transferase hexapeptide repeat family. LpxD subfamily. Homotrimer.

The catalysed reaction is a UDP-3-O-[(3R)-3-hydroxyacyl]-alpha-D-glucosamine + a (3R)-hydroxyacyl-[ACP] = a UDP-2-N,3-O-bis[(3R)-3-hydroxyacyl]-alpha-D-glucosamine + holo-[ACP] + H(+). It functions in the pathway bacterial outer membrane biogenesis; LPS lipid A biosynthesis. Catalyzes the N-acylation of UDP-3-O-acylglucosamine using 3-hydroxyacyl-ACP as the acyl donor. Is involved in the biosynthesis of lipid A, a phosphorylated glycolipid that anchors the lipopolysaccharide to the outer membrane of the cell. This Oleidesulfovibrio alaskensis (strain ATCC BAA-1058 / DSM 17464 / G20) (Desulfovibrio alaskensis) protein is UDP-3-O-acylglucosamine N-acyltransferase.